A 603-amino-acid polypeptide reads, in one-letter code: MDTKIGAIDTCKPTTGDIGSPPSNAVATIQDSAPITTTSESTLGRHLSRRLVQAGVTDVFSVPGDFNLTLLDHLIAEPELNNIGCCNELNAGYAADGYARSRGVGACVVTFTVGGLSVLNAIAGAYSENLPVICIVGGPNSNDFGTNRILHHTIGLPDFSQELRCFQTVTCYQAVVNNLEDAHEQIDKAIATALKESKPVYISISCNLAATPHPTFARDPVPFDLTPRMSNTMGLEAAVEATLEFLNKAVKPVMVGGPKLRVAKASEAFLELADASGYPLAVMPSTKGLVPENHPHFIGTYWGAVSTPFCSEIVESADAYIFAGPIFNDYSSVGYSLLLKKEKAIIVHPDRVVVANGPTFGCVLMSDFFRELAKRVKRNETAYENYERIFVPEGKPLKCKPGEPLRVNAMFQHIQKMLSSETAVIAETGDSWFNCQKLKLPKGCGYEFQMQYGSIGWSVGATLGYAQATPEKRVLSFIGDGSFQVTAQDISTMIRNGQKAIIFLINNGGYTIEVEIHDGPYNVIKNWNYTGLVDAIHNGEGKCWTTKVRYEEELVEAIKTATTEKKDSLCFIEVIVHKDDTSKELLEWGSRVSAANGRPPNPQ.

Residues D65 and H152 each contribute to the substrate site. The thiamine pyrophosphate binding stretch occupies residues 430–512; that stretch reads DSWFNCQKLK…FLINNGGYTI (83 aa). The Mg(2+) site is built by D480, N507, and G509. Position 513 (E513) interacts with substrate.

This sequence belongs to the TPP enzyme family. In terms of assembly, homotetramer. A metal cation is required as a cofactor. The cofactor is thiamine diphosphate. In terms of tissue distribution, expressed in shoots and at lowe levels in roots, flowers and siliques.

The catalysed reaction is a 2-oxocarboxylate + H(+) = an aldehyde + CO2. In Arabidopsis thaliana (Mouse-ear cress), this protein is Pyruvate decarboxylase 4 (PDC4).